Here is a 251-residue protein sequence, read N- to C-terminus: 2,3-bisphosphoglycerate-dependent phosphoglycerate mutase (251 aa).

Substrate is bound by residues 8–15 (RHGESLWN), 21–22 (TG), Arg60, 87–90 (ERHY), Lys98, 114–115 (RR), and 183–184 (GN). Catalysis depends on His9, which acts as the Tele-phosphohistidine intermediate. The Proton donor/acceptor role is filled by Glu87.

It belongs to the phosphoglycerate mutase family. BPG-dependent PGAM subfamily.

The enzyme catalyses (2R)-2-phosphoglycerate = (2R)-3-phosphoglycerate. The protein operates within carbohydrate degradation; glycolysis; pyruvate from D-glyceraldehyde 3-phosphate: step 3/5. In terms of biological role, catalyzes the interconversion of 2-phosphoglycerate and 3-phosphoglycerate. This is 2,3-bisphosphoglycerate-dependent phosphoglycerate mutase from Thermoanaerobacter pseudethanolicus (strain ATCC 33223 / 39E) (Clostridium thermohydrosulfuricum).